Here is a 251-residue protein sequence, read N- to C-terminus: Hydroxyacylglutathione hydrolase (251 aa).

Residues H53, H55, D57, H58, H110, D127, and H165 each contribute to the Zn(2+) site.

The protein belongs to the metallo-beta-lactamase superfamily. Glyoxalase II family. Monomer. Zn(2+) is required as a cofactor.

The catalysed reaction is an S-(2-hydroxyacyl)glutathione + H2O = a 2-hydroxy carboxylate + glutathione + H(+). It functions in the pathway secondary metabolite metabolism; methylglyoxal degradation; (R)-lactate from methylglyoxal: step 2/2. Its function is as follows. Thiolesterase that catalyzes the hydrolysis of S-D-lactoyl-glutathione to form glutathione and D-lactic acid. In Salmonella paratyphi A (strain ATCC 9150 / SARB42), this protein is Hydroxyacylglutathione hydrolase.